Here is an 86-residue protein sequence, read N- to C-terminus: Beta-toxin To4 (86 aa).

Residues 1 to 20 (MTRFVLFISCFFLIGMIVEC) form the signal peptide. The 63-residue stretch at 21–83 (KDGYLMEYGG…IWNRATNKCG (63 aa)) folds into the LCN-type CS-alpha/beta domain. Cystine bridges form between C31/C82, C35/C57, C43/C63, and C47/C65. C82 is subject to Cysteine amide.

It belongs to the long (4 C-C) scorpion toxin superfamily. Sodium channel inhibitor family. Beta subfamily. Expressed by the venom gland.

Its subcellular location is the secreted. Its function is as follows. Beta toxins bind voltage-independently at site-4 of sodium channels (Nav) and shift the voltage of activation toward more negative potentials thereby affecting sodium channel activation and promoting spontaneous and repetitive firing. This toxin shows moderate inhibition of Nav1.1/SCN1A, Nav1.2/SCN2A, and Nav1.4/SCN4A, and promotes a left voltage shift on these channels. It exhibits similar potency on Nav1.2/SCN2A and Nav1.4/SCN4A (40-50% peak current inhibition at 0.5 uM), and weaker inhibition on Nav1.2 (20-30% peak current inhibition at 0.5 uM). The protein is Beta-toxin To4 of Tityus obscurus (Amazonian scorpion).